The following is a 230-amino-acid chain: Protein GrpE (230 aa).

Disordered stretches follow at residues 1-28 and 209-230; these read MADE…EALK and GVSK…EDNA. Residues 221-230 show a composition bias toward polar residues; it reads NGASTSEDNA.

The protein belongs to the GrpE family. Homodimer.

The protein localises to the cytoplasm. Its function is as follows. Participates actively in the response to hyperosmotic and heat shock by preventing the aggregation of stress-denatured proteins, in association with DnaK and GrpE. It is the nucleotide exchange factor for DnaK and may function as a thermosensor. Unfolded proteins bind initially to DnaJ; upon interaction with the DnaJ-bound protein, DnaK hydrolyzes its bound ATP, resulting in the formation of a stable complex. GrpE releases ADP from DnaK; ATP binding to DnaK triggers the release of the substrate protein, thus completing the reaction cycle. Several rounds of ATP-dependent interactions between DnaJ, DnaK and GrpE are required for fully efficient folding. The protein is Protein GrpE of Brucella ovis (strain ATCC 25840 / 63/290 / NCTC 10512).